A 496-amino-acid chain; its full sequence is WD repeat-containing protein 37 (496 aa).

Composition is skewed to polar residues over residues 1–13 (MPTE…TARQ) and 22–31 (SLSIRRTNSS). The segment at 1 to 50 (MPTESGSCSTARQAKQKRKSHSLSIRRTNSSEQERTGLPREMLEGQDSKL) is disordered. Residues 32 to 47 (EQERTGLPREMLEGQD) show a composition bias toward basic and acidic residues. WD repeat units follow at residues 154–194 (GHRD…CLVK) and 197–236 (GHVG…PTPQ). The segment at 238–267 (VADTSQQISGEDEIECSDKDEPDIDGDVSS) is disordered. Positions 247 to 265 (GEDEIECSDKDEPDIDGDV) are enriched in acidic residues. 5 WD repeats span residues 281 to 320 (SHQG…LVHS), 323 to 362 (GHDQ…IHSV), 367 to 405 (GHTD…SPIA), 408 to 447 (RTDS…LARL), and 454 to 495 (GHRR…LLQE).

Forms homodimers. Interacts with PACS1. Interacts with PACS2.

The protein localises to the cytoplasm. It localises to the nucleus. In terms of biological role, required for normal ER Ca2+ handling in lymphocytes. Together with PACS1, it plays an essential role in stabilizing peripheral lymphocyte populations. The protein is WD repeat-containing protein 37 (Wdr37) of Mus musculus (Mouse).